The primary structure comprises 189 residues: Large ribosomal subunit protein eL18 (189 aa).

The protein belongs to the eukaryotic ribosomal protein eL18 family.

The protein resides in the cytoplasm. In Drosophila pseudoobscura pseudoobscura (Fruit fly), this protein is Large ribosomal subunit protein eL18 (RpL18).